Here is a 697-residue protein sequence, read N- to C-terminus: MDMEEKPKYGEPRKFDPSFKGPIQNRGCTDIVCCIIFIIAILGYLAVGILAWTHGDPRKVIYPTDSMGQFCGQGKLEKQPFLFYFNMMKCASPMVLLEFQCPTPQVCVQTCPNRTMTLITAISKPQDWEYYKSYCKEDPGHKAAAQILKEKLCPAYLVSSNPFLQRCFPSMGKKGEVITVGDQEKFSDGVNVLDAKDLMAGMKNASIVMEGRQVAMKIFEDYTKSWYWILICLLIAVVLSLIFIVLLRFLAGVMVWVMILMVVAVIAYGIAHCSIKYVSLKDTPGSNITLQQLGFQPDFAVYLHIRQTWLAFIIILAILELIIILLLIFLRNRIRVAVELMKEASRAIGYVMSSLVFPIFTFFLLAIVIAFWGVNAVFLSTSSEPVYKVFNETECVHSRETCNPENFTSSSMKSDCPHSQCLFAFYGGETPYHKYLILLQFYNVFLFFWCANFVTALGQMTLAGAFASYYWAFDKSKDMPAFPLCASLGRSLRYHTGSLAFGSLLLAIVQVIRVLLEYIDHKLKGAENKFAKFLLCCLKCCFWCLEKFIKFINRNAYIMVAIYGKNFCRSARDAFFLLMRNVVRVVVLDKVTDFILFLGKLLIVGLVGIFAFFFFSGQTDAFKGTAPSLHYYWVPILTVLVCSYLIAHGFFSVYAMCVDTLFLCFLEDLERNDGSAERPYLMSENLLNVLKKKNQAN.

At 1–30 the chain is on the cytoplasmic side; the sequence is MDMEEKPKYGEPRKFDPSFKGPIQNRGCTD. Residues 31–51 form a helical membrane-spanning segment; it reads IVCCIIFIIAILGYLAVGILA. Residues 52 to 226 are Extracellular-facing; it reads WTHGDPRKVI…KIFEDYTKSW (175 aa). Residues Asn113 and Asn204 are each glycosylated (N-linked (GlcNAc...) asparagine). A helical transmembrane segment spans residues 227–247; it reads YWILICLLIAVVLSLIFIVLL. Residues 248–249 lie on the Cytoplasmic side of the membrane; sequence RF. Residues 250–270 traverse the membrane as a helical segment; that stretch reads LAGVMVWVMILMVVAVIAYGI. The Extracellular portion of the chain corresponds to 271-309; sequence AHCSIKYVSLKDTPGSNITLQQLGFQPDFAVYLHIRQTW. N-linked (GlcNAc...) asparagine glycosylation occurs at Asn287. The chain crosses the membrane as a helical span at residues 310–330; that stretch reads LAFIIILAILELIIILLLIFL. Topologically, residues 331–353 are cytoplasmic; sequence RNRIRVAVELMKEASRAIGYVMS. A helical membrane pass occupies residues 354 to 374; that stretch reads SLVFPIFTFFLLAIVIAFWGV. Over 375–435 the chain is Extracellular; that stretch reads NAVFLSTSSE…YGGETPYHKY (61 aa). N-linked (GlcNAc...) asparagine glycans are attached at residues Asn391 and Asn406. The helical transmembrane segment at 436 to 456 threads the bilayer; sequence LILLQFYNVFLFFWCANFVTA. The Cytoplasmic segment spans residues 457-498; it reads LGQMTLAGAFASYYWAFDKSKDMPAFPLCASLGRSLRYHTGS. A helical membrane pass occupies residues 499–519; it reads LAFGSLLLAIVQVIRVLLEYI. At 520–593 the chain is on the extracellular side; the sequence is DHKLKGAENK…RVVVLDKVTD (74 aa). The helical transmembrane segment at 594 to 614 threads the bilayer; the sequence is FILFLGKLLIVGLVGIFAFFF. The Cytoplasmic segment spans residues 615 to 632; that stretch reads FSGQTDAFKGTAPSLHYY. A helical transmembrane segment spans residues 633–653; sequence WVPILTVLVCSYLIAHGFFSV. Residues 654–697 lie on the Extracellular side of the membrane; the sequence is YAMCVDTLFLCFLEDLERNDGSAERPYLMSENLLNVLKKKNQAN.

This sequence belongs to the CTL (choline transporter-like) family.

The protein localises to the cell membrane. It is found in the mitochondrion outer membrane. It catalyses the reaction choline(out) + n H(+)(in) = choline(in) + n H(+)(out). It carries out the reaction ethanolamine(out) + n H(+)(in) = ethanolamine(in) + n H(+)(out). Choline/H+ antiporter, mainly in mitochodria. Also acts as a low-affinity ethanolamine/H+ antiporter, regulating the supply of extracellular ethanolamine (Etn) for the CDP-Etn pathway, redistribute intracellular Etn and balance the CDP-Cho and CDP-Etn arms of the Kennedy pathway. The sequence is that of Choline transporter-like protein 2 (slc44a2) from Danio rerio (Zebrafish).